The following is a 378-amino-acid chain: MMSIASGPSHAAYTWASQGGGFGNQTVVDKVPPEMLHMVDAHWYQFPPMNPLWHALLGFVIGVLGVISVIGNGMVIYIFTTTKSLRTPSNLLVVNLAISDFLMMLCMSPAMVINCYYETWVLGPLFCELYGLAGSLFGCASIWTMTMIAFDRYNVIVKGLSAKPMTINGALIRILTIWFFTLAWTIAPMFGWNRYVPEGNMTACGTDYLTKDLFSRSYILIYSIFVYFTPLFLIIYSYFFIIQAVAAHEKNMREQAKKMNVASLRSAENQSTSAECKLAKVALMTISLWFMAWTPYLVINYSGIFETTKISPLFTIWGSLFAKANAVYNPIVYGISHPKYRAALFQKFPSLACTTEPTGADTMSTTTTVTEGNEKPAA.

Residues 1–53 lie on the Extracellular side of the membrane; the sequence is MMSIASGPSHAAYTWASQGGGFGNQTVVDKVPPEMLHMVDAHWYQFPPMNPLW. Residue asparagine 24 is glycosylated (N-linked (GlcNAc...) asparagine). The chain crosses the membrane as a helical span at residues 54–78; it reads HALLGFVIGVLGVISVIGNGMVIYI. At 79–90 the chain is on the cytoplasmic side; that stretch reads FTTTKSLRTPSN. Residues 91–115 traverse the membrane as a helical segment; the sequence is LLVVNLAISDFLMMLCMSPAMVINC. Over 116-130 the chain is Extracellular; sequence YYETWVLGPLFCELY. An intrachain disulfide couples cysteine 127 to cysteine 204. Residues 131–150 form a helical membrane-spanning segment; sequence GLAGSLFGCASIWTMTMIAF. At 151–169 the chain is on the cytoplasmic side; it reads DRYNVIVKGLSAKPMTING. The chain crosses the membrane as a helical span at residues 170–193; it reads ALIRILTIWFFTLAWTIAPMFGWN. Over 194 to 217 the chain is Extracellular; it reads RYVPEGNMTACGTDYLTKDLFSRS. N-linked (GlcNAc...) asparagine glycosylation is present at asparagine 200. The chain crosses the membrane as a helical span at residues 218–245; it reads YILIYSIFVYFTPLFLIIYSYFFIIQAV. Over 246-280 the chain is Cytoplasmic; it reads AAHEKNMREQAKKMNVASLRSAENQSTSAECKLAK. A helical membrane pass occupies residues 281-304; it reads VALMTISLWFMAWTPYLVINYSGI. Topologically, residues 305–311 are extracellular; that stretch reads FETTKIS. The helical transmembrane segment at 312–336 threads the bilayer; sequence PLFTIWGSLFAKANAVYNPIVYGIS. An N6-(retinylidene)lysine modification is found at lysine 323. At 337-378 the chain is on the cytoplasmic side; the sequence is HPKYRAALFQKFPSLACTTEPTGADTMSTTTTVTEGNEKPAA.

The protein belongs to the G-protein coupled receptor 1 family. Opsin subfamily. Phosphorylated on some or all of the serine and threonine residues present in the C-terminal region.

It localises to the membrane. Functionally, visual pigments are the light-absorbing molecules that mediate vision. They consist of an apoprotein, opsin, covalently linked to cis-retinal. The polypeptide is Rhodopsin (Camponotus atriceps (Florida carpenter ant)).